Consider the following 496-residue polypeptide: MATCADTLGPLLGTAAANATDYLCNQFADTTSAVDSTYLLFSAYLVFAMQLGFAMLCAGSVRAKNTMNIMLTNVLDAAAGALFYYLFGFAFAFGAPSNGFIGKHFFGLKQVPQVGFDYSFFLFQWAFAIAAAGITSGSIAERTQFVAYLIYSAFLTGFVYPVVSHWIWSADGWASASRTSGSLLFGSGVIDFAGSGVVHMVGGVAGLWGALIEGPRIGRFDHAGRSVALRGHSASLVVLGSFLLWFGWYGFNPGSFLTILKSYGPPGSIHGQWSAVGRTAVTTTLAGSTAALTTLFGKRLQTGHWNVIDVCNGLLGGFAAITAGCSVVDPWAAIICGFVSAWVLIGLNALAARLKFDDPLEAAQLHGGCGAWGVIFTALFARKEYVDQIFGQPGRPYGLFMGGGGRLLGAHIVVILVIAAWVSFTMAPLFLVLNKLGLLRISAEDEMAGMDQTRHGGFAYAYHDDDASGKPDRSVGGFMLKSAHGTQVAAEMGGHV.

The next 11 helical transmembrane spans lie at 39–59 (LLFSAYLVFAMQLGFAMLCAG), 74–94 (VLDAAAGALFYYLFGFAFAFG), 120–140 (FFLFQWAFAIAAAGITSGSIA), 148–168 (YLIYSAFLTGFVYPVVSHWIW), 192–212 (FAGSGVVHMVGGVAGLWGALI), 236–256 (LVVLGSFLLWFGWYGFNPGSF), 274–296 (SAVGRTAVTTTLAGSTAALTTLF), 307–327 (VIDVCNGLLGGFAAITAGCSV), 331–351 (WAAIICGFVSAWVLIGLNALA), 360–380 (LEAAQLHGGCGAWGVIFTALF), and 412–432 (IVVILVIAAWVSFTMAPLFLV).

It belongs to the ammonia transporter channel (TC 1.A.11.2) family. In terms of tissue distribution, expressed in exodermis, sclerenchyma, endodermis and pericycle cells of primary root tips.

Its subcellular location is the membrane. Ammonium transporter probably involved in ammonium uptake from the soil and ammonium uptake and retrieval in the vascular system. The chain is Ammonium transporter 1 member 2 (AMT1-2) from Oryza sativa subsp. japonica (Rice).